The sequence spans 376 residues: Alanine racemase (376 aa).

The active-site Proton acceptor; specific for D-alanine is Lys36. Residue Lys36 is modified to N6-(pyridoxal phosphate)lysine. Arg134 serves as a coordination point for substrate. Tyr266 functions as the Proton acceptor; specific for L-alanine in the catalytic mechanism. Position 314 (Met314) interacts with substrate.

The protein belongs to the alanine racemase family. Requires pyridoxal 5'-phosphate as cofactor.

The enzyme catalyses L-alanine = D-alanine. Its pathway is amino-acid biosynthesis; D-alanine biosynthesis; D-alanine from L-alanine: step 1/1. Catalyzes the interconversion of L-alanine and D-alanine. May also act on other amino acids. The chain is Alanine racemase (alr) from Nitratidesulfovibrio vulgaris (strain ATCC 29579 / DSM 644 / CCUG 34227 / NCIMB 8303 / VKM B-1760 / Hildenborough) (Desulfovibrio vulgaris).